We begin with the raw amino-acid sequence, 205 residues long: Ribosome maturation factor RimP (205 aa).

The segment covering 1-13 (MSNAEATTSSDRT) has biased composition (polar residues). Positions 1–27 (MSNAEATTSSDRTGTGKAEAESVHNPE) are disordered. The span at 18–27 (AEAESVHNPE) shows a compositional bias: basic and acidic residues.

It belongs to the RimP family.

Its subcellular location is the cytoplasm. In terms of biological role, required for maturation of 30S ribosomal subunits. This chain is Ribosome maturation factor RimP, found in Arthrobacter sp. (strain FB24).